Reading from the N-terminus, the 136-residue chain is uncharacterized protein (136 aa).

A signal peptide spans 1 to 35 (MTHRAVPCQPRAFSKIKVLVISFLFLMVAFLPFSS).

This is an uncharacterized protein from Saccharomyces cerevisiae (strain ATCC 204508 / S288c) (Baker's yeast).